Here is a 165-residue protein sequence, read N- to C-terminus: Protein OPG091 (165 aa).

The protein belongs to the orthopoxvirus OPG091 family.

Its subcellular location is the virion. It is found in the host cytoplasm. Contributes to vaccinia virus virulence in mice but not to replication in cell culture. The sequence is that of Protein OPG091 (OPG091) from Vaccinia virus (strain Western Reserve) (VACV).